Reading from the N-terminus, the 214-residue chain is Glutathione S-transferase F11 (214 aa).

The region spanning 2–82 is the GST N-terminal domain; that stretch reads VVKVYGQIKA…YYATKYADQG (81 aa). Glutathione-binding positions include 11-12, 40-41, 53-54, and 66-67; these read AA, QK, QV, and ES. Residues 89–214 form the GST C-terminal domain; that stretch reads TLEGRAIVDQ…WKKLMELAAY (126 aa).

This sequence belongs to the GST superfamily. Phi family.

It localises to the cytoplasm. The protein resides in the cytosol. The catalysed reaction is RX + glutathione = an S-substituted glutathione + a halide anion + H(+). May be involved in the conjugation of reduced glutathione to a wide number of exogenous and endogenous hydrophobic electrophiles and have a detoxification role against certain herbicides. The polypeptide is Glutathione S-transferase F11 (Arabidopsis thaliana (Mouse-ear cress)).